Reading from the N-terminus, the 402-residue chain is Protochlorophyllide reductase B, chloroplastic (402 aa).

Belongs to the short-chain dehydrogenases/reductases (SDR) family. POR subfamily.

It localises to the plastid. The protein localises to the chloroplast. The catalysed reaction is chlorophyllide a + NADP(+) = protochlorophyllide a + NADPH + H(+). It functions in the pathway porphyrin-containing compound metabolism; chlorophyll biosynthesis. Its function is as follows. Phototransformation of protochlorophyllide (Pchlide) to chlorophyllide (Chlide). This chain is Protochlorophyllide reductase B, chloroplastic (PORB), found in Oryza sativa subsp. japonica (Rice).